The following is a 200-amino-acid chain: Cytochrome c biogenesis ATP-binding export protein CcmA (200 aa).

The 200-residue stretch at 1 to 200 (MRLSGNGLRC…ARELRIGGAA (200 aa)) folds into the ABC transporter domain. 35–42 (GPNGAGKT) provides a ligand contact to ATP.

The protein belongs to the ABC transporter superfamily. CcmA exporter (TC 3.A.1.107) family. As to quaternary structure, the complex is composed of two ATP-binding proteins (CcmA) and two transmembrane proteins (CcmB).

It localises to the cell inner membrane. It carries out the reaction heme b(in) + ATP + H2O = heme b(out) + ADP + phosphate + H(+). Its function is as follows. Part of the ABC transporter complex CcmAB involved in the biogenesis of c-type cytochromes; once thought to export heme, this seems not to be the case, but its exact role is uncertain. Responsible for energy coupling to the transport system. The polypeptide is Cytochrome c biogenesis ATP-binding export protein CcmA (Nitrobacter winogradskyi (strain ATCC 25391 / DSM 10237 / CIP 104748 / NCIMB 11846 / Nb-255)).